A 727-amino-acid chain; its full sequence is NADH-ubiquinone oxidoreductase 75 kDa subunit, mitochondrial (727 aa).

Residues 1 to 23 (MLRIPVRKALVGLSKSPKGCVRT) constitute a mitochondrion transit peptide. The 2Fe-2S ferredoxin-type domain occupies 30–108 (NLIEVFVDGQ…GWNILTNSEK (79 aa)). Cys-64, Cys-75, and Cys-78 together coordinate [2Fe-2S] cluster. N6-acetyllysine is present on Lys-84. A [2Fe-2S] cluster-binding site is contributed by Cys-92. A 4Fe-4S His(Cys)3-ligated-type domain is found at 108–147 (KSKKAREGVMEFLLANHPLDCPICDQGGECDLQDQSMMFG). Positions 124, 128, 131, 137, 176, 179, 182, and 226 each coordinate [4Fe-4S] cluster. Positions 245 to 301 (TRKTESIDVMDAVGSNIVVSTRTGEVMRILPRMHEDINEEWISDKTRFAYDGLKRQR) constitute a 4Fe-4S Mo/W bis-MGD-type domain. N6-acetyllysine is present on residues Lys-467, Lys-499, and Lys-709.

It belongs to the complex I 75 kDa subunit family. In terms of assembly, core subunit of respiratory chain NADH dehydrogenase (Complex I) which is composed of 45 different subunits. This is the largest subunit of complex I and it is a component of the iron-sulfur (IP) fragment of the enzyme. Complex I associates with ubiquinol-cytochrome reductase complex (Complex III) to form supercomplexes. Interacts with MDM2 and AKAP1. [2Fe-2S] cluster serves as cofactor. It depends on [4Fe-4S] cluster as a cofactor.

The protein localises to the mitochondrion inner membrane. The catalysed reaction is a ubiquinone + NADH + 5 H(+)(in) = a ubiquinol + NAD(+) + 4 H(+)(out). In terms of biological role, core subunit of the mitochondrial membrane respiratory chain NADH dehydrogenase (Complex I) which catalyzes electron transfer from NADH through the respiratory chain, using ubiquinone as an electron acceptor. Essential for catalysing the entry and efficient transfer of electrons within complex I. Plays a key role in the assembly and stability of complex I and participates in the association of complex I with ubiquinol-cytochrome reductase complex (Complex III) to form supercomplexes. The protein is NADH-ubiquinone oxidoreductase 75 kDa subunit, mitochondrial (NDUFS1) of Macaca fascicularis (Crab-eating macaque).